The primary structure comprises 124 residues: Large ribosomal subunit protein bL20 (124 aa).

This sequence belongs to the bacterial ribosomal protein bL20 family.

Functionally, binds directly to 23S ribosomal RNA and is necessary for the in vitro assembly process of the 50S ribosomal subunit. It is not involved in the protein synthesizing functions of that subunit. This is Large ribosomal subunit protein bL20 from Ehrlichia canis (strain Jake).